The following is a 348-amino-acid chain: NAC domain-containing protein 101 (348 aa).

The 150-residue stretch at 7–156 folds into the NAC domain; it reads IPPGYRFHPT…GWVVCRAFKK (150 aa). A DNA-binding region spans residues 107-162; sequence VGMRKTLVFYKGRAPNGQKSDWIMHEYRLETDENGPPHEEGWVVCRAFKKKLTTMN. Positions 325-348 are disordered; it reads MVSMNASSSSSPCSFYSWAQNTHT. Over residues 327-341 the composition is skewed to low complexity; sequence SMNASSSSSPCSFYS.

This sequence belongs to the plant vascular related NAC-domain protein family. Homodimer. In terms of tissue distribution, expressed in root inner metaxylem vessels and in hypocotyl vessels. Present in root developing xylems. Accumulates in the xylem but not in interfascicular fibers or pith cells in inflorescence stems. Absent from secondary xylem in roots.

It is found in the nucleus. In terms of biological role, transcription activator that binds to the secondary wall NAC binding element (SNBE), 5'-(T/A)NN(C/T)(T/C/G)TNNNNNNNA(A/C)GN(A/C/T)(A/T)-3', and to the tracheary elements (TE) specific regulating cis-element (TERE), 5'-CTTNAAAGCNA-3', in the promoter of target genes (e.g. genes involved in secondary wall biosynthesis, cell wall modification such as xylan accumulation, and programmed cell death). Involved in xylem formation in roots and shoots, especially regulating metaxylem vessel differentiation by promoting immature xylem vessel-specific genes expression, especially genes regulating programmed cell death (PCD) and secondary wall formation in tracheary elements (TE). Can activate MYB25, MYB46, MYB58, MYB63, MYB83, MYB103, CESA4, LBD15, LBD30, ERF115, XCP1, XCP2, NAC010/SND3, KNAT7, ASL19 and ASL20 expression. This Arabidopsis thaliana (Mouse-ear cress) protein is NAC domain-containing protein 101.